An 86-amino-acid chain; its full sequence is Triple QxxK/R motif-containing protein (86 aa).

The helical transmembrane segment at 51–71 threads the bilayer; that stretch reads VGLMLAAILALLLAFYAFFYL.

Belongs to the TRIQK family.

It is found in the endoplasmic reticulum membrane. May play a role in cell growth and maintenance of cell morphology. In Rattus norvegicus (Rat), this protein is Triple QxxK/R motif-containing protein (Triqk).